The following is a 512-amino-acid chain: tRNA-2-methylthio-N(6)-dimethylallyladenosine synthase (512 aa).

The MTTase N-terminal domain occupies 23-139 (RTYQVRTYGC…LPTLLERARH (117 aa)). C32, C68, C102, C176, C180, and C183 together coordinate [4Fe-4S] cluster. The 237-residue stretch at 162 to 398 (RESAYAAWVS…IELQERISLE (237 aa)) folds into the Radical SAM core domain. The region spanning 401 to 469 (REQVGRAVEL…PHHLIADAPI (69 aa)) is the TRAM domain. Positions 477–512 (AGDAHAAGQKPRTGVGLGMPRIGAPAPSATAEGCGC) are disordered.

The protein belongs to the methylthiotransferase family. MiaB subfamily. In terms of assembly, monomer. It depends on [4Fe-4S] cluster as a cofactor.

The protein resides in the cytoplasm. It catalyses the reaction N(6)-dimethylallyladenosine(37) in tRNA + (sulfur carrier)-SH + AH2 + 2 S-adenosyl-L-methionine = 2-methylsulfanyl-N(6)-dimethylallyladenosine(37) in tRNA + (sulfur carrier)-H + 5'-deoxyadenosine + L-methionine + A + S-adenosyl-L-homocysteine + 2 H(+). Functionally, catalyzes the methylthiolation of N6-(dimethylallyl)adenosine (i(6)A), leading to the formation of 2-methylthio-N6-(dimethylallyl)adenosine (ms(2)i(6)A) at position 37 in tRNAs that read codons beginning with uridine. The protein is tRNA-2-methylthio-N(6)-dimethylallyladenosine synthase of Mycolicibacterium smegmatis (strain ATCC 700084 / mc(2)155) (Mycobacterium smegmatis).